Consider the following 680-residue polypeptide: DNA-directed RNA polymerase subunit beta' (680 aa).

Residues cysteine 69, cysteine 71, cysteine 87, and cysteine 90 each contribute to the Zn(2+) site. Mg(2+) contacts are provided by aspartate 489, aspartate 491, and aspartate 493.

It belongs to the RNA polymerase beta' chain family. RpoC1 subfamily. As to quaternary structure, in plastids the minimal PEP RNA polymerase catalytic core is composed of four subunits: alpha, beta, beta', and beta''. When a (nuclear-encoded) sigma factor is associated with the core the holoenzyme is formed, which can initiate transcription. Requires Mg(2+) as cofactor. Zn(2+) is required as a cofactor.

Its subcellular location is the plastid. The protein resides in the chloroplast. It carries out the reaction RNA(n) + a ribonucleoside 5'-triphosphate = RNA(n+1) + diphosphate. Functionally, DNA-dependent RNA polymerase catalyzes the transcription of DNA into RNA using the four ribonucleoside triphosphates as substrates. This is DNA-directed RNA polymerase subunit beta' from Capsella bursa-pastoris (Shepherd's purse).